The chain runs to 324 residues: Protein FAM228B (324 aa).

It belongs to the FAM228 family.

The chain is Protein FAM228B (FAM228B) from Homo sapiens (Human).